The chain runs to 141 residues: Small ribosomal subunit protein bS6 (141 aa).

Residues 97 to 141 (TGQSEMLKAEENRSERRERRDRPEHSDSADGDDGDNSDVSDNADE) form a disordered region. Over residues 103-124 (LKAEENRSERRERRDRPEHSDS) the composition is skewed to basic and acidic residues. Over residues 125–141 (ADGDDGDNSDVSDNADE) the composition is skewed to acidic residues.

Belongs to the bacterial ribosomal protein bS6 family.

Functionally, binds together with bS18 to 16S ribosomal RNA. The protein is Small ribosomal subunit protein bS6 of Pseudomonas syringae pv. syringae (strain B728a).